Reading from the N-terminus, the 806-residue chain is Hyperosmolality-gated Ca2+ permeable channel 1.8 (806 aa).

The next 10 membrane-spanning stretches (helical) occupy residues 7-27 (IGVS…AFAV), 102-122 (IYTL…VVLV), 157-177 (KFFF…FMLY), 375-395 (LVIG…IAFV), 427-447 (FLPG…LLIM), 467-487 (YYYF…TAFE), 512-532 (ATFF…GEIL), 576-596 (FLLG…ILIF), 626-646 (VHGR…GLLA), and 650-670 (AADS…FHKY). The disordered stretch occupies residues 726-786 (SSSSSSEKET…HYASAYEQSS (61 aa)). Over residues 731-750 (SEKETHQEETPEVRVDKHET) the composition is skewed to basic and acidic residues. Residue Thr-735 is modified to Phosphothreonine. Over residues 751–762 (QSSSPVTELGTS) the composition is skewed to polar residues. Low complexity predominate over residues 775 to 786 (SSHYASAYEQSS).

The protein belongs to the CSC1 (TC 1.A.17) family.

The protein localises to the golgi apparatus membrane. Its subcellular location is the cell membrane. Its function is as follows. Acts as an osmosensitive calcium-permeable cation channel. The sequence is that of Hyperosmolality-gated Ca2+ permeable channel 1.8 from Arabidopsis thaliana (Mouse-ear cress).